Reading from the N-terminus, the 816-residue chain is Microbial collagenase (816 aa).

A signal peptide spans 1-27 (MSHIRFFPRHRLALACMLASVSSFSFA). His435 lines the Zn(2+) pocket. Glu436 is an active-site residue. His439 contributes to the Zn(2+) binding site.

Belongs to the peptidase M9A family. Zn(2+) serves as cofactor.

The protein resides in the secreted. The catalysed reaction is Digestion of native collagen in the triple helical region at Xaa-|-Gly bonds. With synthetic peptides, a preference is shown for Gly at P3 and P1', Pro and Ala at P2 and P2', and hydroxyproline, Ala or Arg at P3'.. Functionally, possesses gelatinolytic activity. Can cause weak haemolysis on blood agar. This chain is Microbial collagenase (prt), found in Vibrio parahaemolyticus serotype O3:K6 (strain RIMD 2210633).